A 313-amino-acid polypeptide reads, in one-letter code: Ribosomal RNA small subunit methyltransferase H (313 aa).

Residues 35–37, D55, F79, D101, and Q108 each bind S-adenosyl-L-methionine; that span reads GGH.

Belongs to the methyltransferase superfamily. RsmH family.

It is found in the cytoplasm. It catalyses the reaction cytidine(1402) in 16S rRNA + S-adenosyl-L-methionine = N(4)-methylcytidine(1402) in 16S rRNA + S-adenosyl-L-homocysteine + H(+). Specifically methylates the N4 position of cytidine in position 1402 (C1402) of 16S rRNA. The protein is Ribosomal RNA small subunit methyltransferase H of Escherichia coli O7:K1 (strain IAI39 / ExPEC).